A 1193-amino-acid polypeptide reads, in one-letter code: Nucleolar protein 6 (1193 aa).

Disordered regions lie at residues 1–69 (MRFV…TKNV) and 1137–1193 (KREQ…KVLK). Basic and acidic residues-rich tracts occupy residues 31-46 (AGDHSDLDEPKPKIAK) and 1151-1161 (DANKAEEESKP). At Ser-35 the chain carries Phosphoserine. Basic residues predominate over residues 1162-1184 (KPKKHRQRKGTGKKALPKRKRLI).

This sequence belongs to the NRAP family. Part of the small subunit (SSU) processome, composed of more than 70 proteins and the RNA chaperone small nucleolar RNA (snoRNA) U3. As to expression, expressed in nurse cells at stages 9-10 of oogenesis and exported to the oocyte.

It localises to the nucleus. It is found in the nucleolus. The protein localises to the chromosome. Part of the small subunit (SSU) processome, first precursor of the small eukaryotic ribosomal subunit. During the assembly of the SSU processome in the nucleolus, many ribosome biogenesis factors, an RNA chaperone and ribosomal proteins associate with the nascent pre-rRNA and work in concert to generate RNA folding, modifications, rearrangements and cleavage as well as targeted degradation of pre-ribosomal RNA by the RNA exosome. This is Nucleolar protein 6 from Drosophila melanogaster (Fruit fly).